Here is a 357-residue protein sequence, read N- to C-terminus: Ribonuclease 3 (357 aa).

Residues 6–155 form the RNase III domain; sequence IKFIQDQIGY…ILGAIALDSN (150 aa). E45 is a Mg(2+) binding site. D49 is a catalytic residue. Positions 141 and 144 each coordinate Mg(2+). E144 is an active-site residue. 2 DRBM domains span residues 198–267 and 285–355; these read PLHC…YLKD and DSIG…FVLE.

Belongs to the ribonuclease III family. In terms of assembly, homodimer. Requires Mg(2+) as cofactor.

The protein localises to the cytoplasm. It carries out the reaction Endonucleolytic cleavage to 5'-phosphomonoester.. Digests double-stranded RNA. Involved in the processing of primary rRNA transcript to yield the immediate precursors to the large and small rRNAs (23S and 16S). Processes some mRNAs, and tRNAs when they are encoded in the rRNA operon. Processes pre-crRNA and tracrRNA of type II CRISPR loci if present in the organism. The polypeptide is Ribonuclease 3 (rnc) (Roseburia hominis (strain DSM 16839 / JCM 17582 / NCIMB 14029 / A2-183)).